The sequence spans 222 residues: Methylthioribulose-1-phosphate dehydratase (222 aa).

Zn(2+) contacts are provided by H94 and H96.

It belongs to the aldolase class II family. MtnB subfamily. It depends on Zn(2+) as a cofactor.

The enzyme catalyses 5-(methylsulfanyl)-D-ribulose 1-phosphate = 5-methylsulfanyl-2,3-dioxopentyl phosphate + H2O. It functions in the pathway amino-acid biosynthesis; L-methionine biosynthesis via salvage pathway; L-methionine from S-methyl-5-thio-alpha-D-ribose 1-phosphate: step 2/6. Catalyzes the dehydration of methylthioribulose-1-phosphate (MTRu-1-P) into 2,3-diketo-5-methylthiopentyl-1-phosphate (DK-MTP-1-P). The protein is Methylthioribulose-1-phosphate dehydratase of Yersinia pseudotuberculosis serotype O:1b (strain IP 31758).